Here is a 439-residue protein sequence, read N- to C-terminus: MSITTMKGVTSESPAEALSRFQTTGLTLNNPKDLYWMTEFLKEEFYDKGNYYYPIKTVCDGELIETELFCPFEPKLSPHYIQLYNSRDERSNLYAVPPKKTDMKKYNRINCEKMGSLMAPNSNYDDTEMVSLFYSMMYYLNDQTAHLKLPEEDIQPELVDELNDHVLQYLSVFLSIFKPREPQDLERIWNFLDFYQPYFKKVDGKIILHEKYQGRTPPQIGLIKKITGYVLERFAPKKNITQVIYEVIRYIKGIKQEIKIRGDKSFTLSLKEYDEFRDQVTSSPMAHSITDLTYDDFSYKAYMNPLFIKLEDLTSEIITYFNDVCTCDRERLDDDPFNSVFILRDLHSLNYVKSCDLVVKHAHDKLSKFLEIKQTLLKESTNENEKKAIAQMIKTREDSLIGYTIHEICCVTNGYARDHKPLMKDYLEKNIFKKLKATN.

Residues asparagine 322, threonine 326, glutamate 330, and phenylalanine 337 each coordinate Mg(2+).

Belongs to the terpene synthase family. Requires Mg(2+) as cofactor.

It carries out the reaction dimethylallyl diphosphate + L-glutamate = prekainate + diphosphate. It participates in secondary metabolite biosynthesis. Functionally, magnesium-dependent glutamate N-prenyltransferase: part of the gene cluster that mediates the biosynthesis of kainic acid (KA) and derivatives, natural products with neurochemical activity acting as ionotropic glutamate receptor (iGluR) agonists, thus being neurotoxins. Catalyzes the conversion of L-glutamic acid (L-Glu) to prekainic acid in the presence of dimethylallyl diphosphate (DMAPP). Can also use geranyl diphosphate (GPP) as substrate, thus leading to the formation of N-geranyl-L-glutamic acid (L-NGG). The sequence is that of Magnesium-dependent glutamate N-prenyltransferase from Digenea simplex (Marine red alga).